Here is a 597-residue protein sequence, read N- to C-terminus: Cytosolic phospholipase A2 gamma (597 aa).

The region spanning 1 to 597 (MELSSGVCPA…FKKSHNISKD (597 aa)) is the PLA2c domain. Catalysis depends on S83, which acts as the Nucleophile. The active-site Proton acceptor is the D417. A disordered region spans residues 576 to 597 (RVKDPQGSQTVEFKKSHNISKD). A compositionally biased stretch (basic and acidic residues) spans 587-597 (EFKKSHNISKD).

Highly expressed in ovary, where it localizes to oocytes in preantral and antral stage follicles (at protein level). Not detected in other tissues tested.

The protein localises to the nucleus. The protein resides in the nucleoplasm. It localises to the nucleus envelope. It is found in the cytoplasm. Its subcellular location is the cell cortex. The protein localises to the cytoskeleton. The protein resides in the spindle. The enzyme catalyses a 1,2-diacyl-sn-glycero-3-phosphocholine + H2O = a 1-acyl-sn-glycero-3-phosphocholine + a fatty acid + H(+). The catalysed reaction is a 1-O-alkyl-2-acyl-sn-glycero-3-phosphocholine + H2O = a 1-O-alkyl-sn-glycero-3-phosphocholine + a fatty acid + H(+). It catalyses the reaction 1,2-dihexadecanoyl-sn-glycero-3-phosphocholine + H2O = 1-hexadecanoyl-sn-glycero-3-phosphocholine + hexadecanoate + H(+). It carries out the reaction 1-hexadecanoyl-2-(9Z-octadecenoyl)-sn-glycero-3-phosphocholine + H2O = 1-hexadecanoyl-sn-glycero-3-phosphocholine + (9Z)-octadecenoate + H(+). The enzyme catalyses 1-hexadecanoyl-2-(9Z,12Z-octadecadienoyl)-sn-glycero-3-phosphocholine + H2O = (9Z,12Z)-octadecadienoate + 1-hexadecanoyl-sn-glycero-3-phosphocholine + H(+). The catalysed reaction is 1-hexadecanoyl-2-(5Z,8Z,11Z,14Z-eicosatetraenoyl)-sn-glycero-3-phosphocholine + H2O = 1-hexadecanoyl-sn-glycero-3-phosphocholine + (5Z,8Z,11Z,14Z)-eicosatetraenoate + H(+). It catalyses the reaction 1-O-hexadecyl-2-(5Z,8Z,11Z,14Z)-eicosatetraenoyl-sn-glycero-3-phosphocholine + H2O = 1-O-hexadecyl-sn-glycero-3-phosphocholine + (5Z,8Z,11Z,14Z)-eicosatetraenoate + H(+). It carries out the reaction 1-hexadecanoyl-2-(5Z,8Z,11Z,14Z-eicosatetraenoyl)-sn-glycero-3-phosphocholine + H2O = 2-(5Z,8Z,11Z,14Z)-eicosatetraenoyl-sn-glycero-3-phosphocholine + hexadecanoate + H(+). The enzyme catalyses a 1-acyl-sn-glycero-3-phosphocholine + H2O = sn-glycerol 3-phosphocholine + a fatty acid + H(+). The catalysed reaction is 1-hexadecanoyl-sn-glycero-3-phosphocholine + H2O = sn-glycerol 3-phosphocholine + hexadecanoate + H(+). It catalyses the reaction 2 1-hexadecanoyl-sn-glycero-3-phosphocholine = 1,2-dihexadecanoyl-sn-glycero-3-phosphocholine + sn-glycerol 3-phosphocholine. It carries out the reaction 1-hexadecanoyl-sn-glycero-3-phosphoethanolamine + 1-hexadecanoyl-sn-glycero-3-phosphocholine = 1,2-dihexadecanoyl-sn-glycero-3-phosphoethanolamine + sn-glycerol 3-phosphocholine. The enzyme catalyses 1-hexadecanoyl-sn-glycero-3-phosphoethanolamine + 1-hexadecanoyl-sn-glycero-3-phosphocholine = sn-glycero-3-phosphoethanolamine + 1,2-dihexadecanoyl-sn-glycero-3-phosphocholine. The catalysed reaction is 2 1-hexadecanoyl-sn-glycero-3-phosphoethanolamine = 1,2-dihexadecanoyl-sn-glycero-3-phosphoethanolamine + sn-glycero-3-phosphoethanolamine. It catalyses the reaction 1-O-hexadecyl-sn-glycero-3-phosphocholine + 1-hexadecanoyl-sn-glycero-3-phosphocholine = 1-O-hexadecyl-2-hexadecanoyl-sn-glycero-3-phosphocholine + sn-glycerol 3-phosphocholine. It carries out the reaction a 1-O-(1Z-alkenyl)-sn-glycero-3-phosphoethanolamine + 1-hexadecanoyl-sn-glycero-3-phosphocholine = 1-O-(1Z)-alkenyl-2-hexadecanoyl-sn-glycero-3-phosphoethanolamine + sn-glycerol 3-phosphocholine. The enzyme catalyses 1-O-hexadecyl-sn-glycero-3-phosphocholine + 1-hexadecanoyl-sn-glycero-3-phosphoethanolamine = 1-O-hexadecyl-2-hexadecanoyl-sn-glycero-3-phosphocholine + sn-glycero-3-phosphoethanolamine. The catalysed reaction is 1-octadecanoyl-2-(5Z,8Z,11Z,14Z)-eicosatetraenoyl-sn-glycero-3-phosphoethanolamine + 1-hexadecanoyl-sn-glycero-3-phosphocholine = 1-octadecanoyl-sn-glycero-3-phosphoethanolamine + 1-hexadecanoyl-2-(5Z,8Z,11Z,14Z-eicosatetraenoyl)-sn-glycero-3-phosphocholine. It catalyses the reaction 1-octadecanoyl-2-(5Z,8Z,11Z,14Z)-eicosatetraenoyl-sn-glycero-3-phosphoethanolamine + 1-O-hexadecyl-sn-glycero-3-phosphocholine = 1-octadecanoyl-sn-glycero-3-phosphoethanolamine + 1-O-hexadecyl-2-(5Z,8Z,11Z,14Z)-eicosatetraenoyl-sn-glycero-3-phosphocholine. It carries out the reaction 1-hexadecanoyl-2-(9Z,12Z-octadecadienoyl)-sn-glycero-3-phosphocholine + a 1-O-(1Z-alkenyl)-sn-glycero-3-phosphoethanolamine = 1-O-(1Z-alkenyl)-2-(9Z,12Z-octadecadienoyl)-sn-glycero-3-phosphoethanolamine + 1-hexadecanoyl-sn-glycero-3-phosphocholine. The enzyme catalyses 1-hexadecanoyl-2-(5Z,8Z,11Z,14Z-eicosatetraenoyl)-sn-glycero-3-phosphocholine + a 1-O-(1Z-alkenyl)-sn-glycero-3-phosphoethanolamine = 1-O-(1Z)-alkenyl-2-(5Z,8Z,11Z,14Z)-eicosatetraenoyl-sn-glycero-3-phosphoethanolamine + 1-hexadecanoyl-sn-glycero-3-phosphocholine. In terms of biological role, calcium-independent phospholipase, lysophospholipase and O-acyltransferase involved in phospholipid remodeling. Preferentially hydrolyzes the ester bond of the fatty acyl group attached at sn-2 position of phospholipids with choline and ethanolamine head groups, producing lysophospholipids that are used in deacylation-reacylation cycles. Transfers the sn-1 fatty acyl from one lysophospholipid molecule to the sn-2 position of another lysophospholipid to form diacyl, alkylacyl and alkenylacyl glycerophospholipids. Cleaves ester bonds but not alkyl or alkenyl ether bonds at the sn-1 position of lysophospholipids. Catalyzes sn-2 fatty acyl transfer from phospholipids to the sn-2 position of 1-O-alkyl or 1-O-alkenyl lysophospholipids with lower efficiency. The chain is Cytosolic phospholipase A2 gamma from Mus musculus (Mouse).